The primary structure comprises 68 residues: Guanine nucleotide-binding protein G(I)/G(S)/G(O) subunit gamma-10 (68 aa).

N-acetylserine is present on serine 2. Cysteine 65 is modified (cysteine methyl ester). Residue cysteine 65 is the site of S-geranylgeranyl cysteine attachment. The propeptide at 66–68 (ALL) is removed in mature form.

This sequence belongs to the G protein gamma family. As to quaternary structure, g proteins are composed of 3 units, alpha, beta and gamma. As to expression, abundantly and ubiquitously expressed.

It localises to the cell membrane. Its function is as follows. Guanine nucleotide-binding proteins (G proteins) are involved as a modulator or transducer in various transmembrane signaling systems. The beta and gamma chains are required for the GTPase activity, for replacement of GDP by GTP, and for G protein-effector interaction. Interacts with beta-1 and beta-2, but not with beta-3. The protein is Guanine nucleotide-binding protein G(I)/G(S)/G(O) subunit gamma-10 (GNG10) of Homo sapiens (Human).